Here is a 231-residue protein sequence, read N- to C-terminus: 5'-methylthioadenosine/S-adenosylhomocysteine nucleosidase (231 aa).

Glu12 serves as the catalytic Proton acceptor. Residues Gly78, Val153, and 174 to 175 (ME) each bind substrate. The active-site Proton donor is the Asp198.

It belongs to the PNP/UDP phosphorylase family. MtnN subfamily.

It carries out the reaction S-adenosyl-L-homocysteine + H2O = S-(5-deoxy-D-ribos-5-yl)-L-homocysteine + adenine. The catalysed reaction is S-methyl-5'-thioadenosine + H2O = 5-(methylsulfanyl)-D-ribose + adenine. The enzyme catalyses 5'-deoxyadenosine + H2O = 5-deoxy-D-ribose + adenine. Its pathway is amino-acid biosynthesis; L-methionine biosynthesis via salvage pathway; S-methyl-5-thio-alpha-D-ribose 1-phosphate from S-methyl-5'-thioadenosine (hydrolase route): step 1/2. Functionally, catalyzes the irreversible cleavage of the glycosidic bond in both 5'-methylthioadenosine (MTA) and S-adenosylhomocysteine (SAH/AdoHcy) to adenine and the corresponding thioribose, 5'-methylthioribose and S-ribosylhomocysteine, respectively. Also cleaves 5'-deoxyadenosine, a toxic by-product of radical S-adenosylmethionine (SAM) enzymes, into 5-deoxyribose and adenine. The sequence is that of 5'-methylthioadenosine/S-adenosylhomocysteine nucleosidase from Vibrio vulnificus (strain CMCP6).